A 558-amino-acid chain; its full sequence is INCREASED PETAL GROWTH ANISOTROPY 1-like protein 2 (558 aa).

A compositionally biased stretch (low complexity) spans 1-15 (MSRISTTSTTPSRVR). The tract at residues 1–54 (MSRISTTSTTPSRVRAANSHYSVISKPRAQDDNGLTGGKPKSSGYDVKNDPAKR) is disordered. The stretch at 104 to 180 (VMATAAAEDE…EAKISSLSSN (77 aa)) forms a coiled coil. The tract at residues 207-285 (KVKKEVAVES…AARAQKSPPV (79 aa)) is disordered. Composition is skewed to pro residues over residues 221 to 236 (PPSPSPSRLPPTPPLP) and 256 to 272 (FAPPTPPPPPPPPPPRP). The stretch at 392 to 448 (KADTLQEAAVEYRELKKLEKELSSYSDDPNIHYGVALKKMANLLDKSEQRIRRLVRL) forms a coiled coil.

This sequence belongs to the IPGA1 family.

The protein resides in the cytoplasm. It is found in the cytoskeleton. Microtubule-associated protein probably involved in the regulation of microtubule organization. This is INCREASED PETAL GROWTH ANISOTROPY 1-like protein 2 from Arabidopsis thaliana (Mouse-ear cress).